A 41-amino-acid chain; its full sequence is Large ribosomal subunit protein bL36 (41 aa).

The protein belongs to the bacterial ribosomal protein bL36 family.

The polypeptide is Large ribosomal subunit protein bL36 (Edwardsiella ictaluri (strain 93-146)).